Here is a 283-residue protein sequence, read N- to C-terminus: Myeloid differentiation primary response protein MyD88-A (283 aa).

The Death domain occupies 27-105 (RLCLYLNPDA…DILTDLGPLI (79 aa)). Residues 106–143 (EADCMKYLEKKHVPLPIQDDKVDSSEQYRITKSDDPYG) form an intermediate domain region. The region spanning 147 to 281 (ETFDAFICYC…WFWDKLAKAL (135 aa)) is the TIR domain.

The protein resides in the cytoplasm. In terms of biological role, adapter protein involved in the Toll-like receptor and IL-1 receptor signaling pathway in the innate immune response. Activates expression of target genes in the Spemann organizer region during early embryonic development. Is required for normal axis formation. This Xenopus laevis (African clawed frog) protein is Myeloid differentiation primary response protein MyD88-A (myd88-a).